The chain runs to 753 residues: Polyribonucleotide nucleotidyltransferase (753 aa).

Mg(2+)-binding residues include aspartate 543 and aspartate 549. A KH domain is found at 609–668 (PRITTVKIPVAKIGELIGPKGKNINALTEETGANISIEDDGTVFISAADGASAEAAIEKI). The 70-residue stretch at 680-749 (GERFLGTVVK…NRGKISLVPV (70 aa)) folds into the S1 motif domain.

It belongs to the polyribonucleotide nucleotidyltransferase family. Mg(2+) serves as cofactor.

The protein localises to the cytoplasm. It carries out the reaction RNA(n+1) + phosphate = RNA(n) + a ribonucleoside 5'-diphosphate. Involved in mRNA degradation. Catalyzes the phosphorolysis of single-stranded polyribonucleotides processively in the 3'- to 5'-direction. This is Polyribonucleotide nucleotidyltransferase from Corynebacterium glutamicum (strain R).